A 298-amino-acid polypeptide reads, in one-letter code: Probable GTP 3',8-cyclase (298 aa).

Positions 4–227 constitute a Radical SAM core domain; that stretch reads RYGREIRSFR…MQNRKKYVID (224 aa). Arg13 serves as a coordination point for GTP. 2 residues coordinate [4Fe-4S] cluster: Cys20 and Cys24. Tyr26 is a binding site for S-adenosyl-L-methionine. Residue Cys27 coordinates [4Fe-4S] cluster. Lys61 provides a ligand contact to GTP. Gly65 lines the S-adenosyl-L-methionine pocket. Thr91 is a binding site for GTP. Ser115 lines the S-adenosyl-L-methionine pocket. Lys152 contributes to the GTP binding site. [4Fe-4S] cluster is bound by residues Cys243 and Cys246. 248-250 is a binding site for GTP; it reads RIR. Cys260 serves as a coordination point for [4Fe-4S] cluster.

This sequence belongs to the radical SAM superfamily. MoaA family. The cofactor is [4Fe-4S] cluster.

It carries out the reaction GTP + AH2 + S-adenosyl-L-methionine = (8S)-3',8-cyclo-7,8-dihydroguanosine 5'-triphosphate + 5'-deoxyadenosine + L-methionine + A + H(+). The protein operates within cofactor biosynthesis; molybdopterin biosynthesis. Functionally, catalyzes the cyclization of GTP to (8S)-3',8-cyclo-7,8-dihydroguanosine 5'-triphosphate. The sequence is that of Probable GTP 3',8-cyclase from Methanococcus maripaludis (strain C6 / ATCC BAA-1332).